A 284-amino-acid chain; its full sequence is Bifunctional protein FolD (284 aa).

Residues 165–167 (GRS) and Ser190 each bind NADP(+).

Belongs to the tetrahydrofolate dehydrogenase/cyclohydrolase family. As to quaternary structure, homodimer.

It carries out the reaction (6R)-5,10-methylene-5,6,7,8-tetrahydrofolate + NADP(+) = (6R)-5,10-methenyltetrahydrofolate + NADPH. It catalyses the reaction (6R)-5,10-methenyltetrahydrofolate + H2O = (6R)-10-formyltetrahydrofolate + H(+). It participates in one-carbon metabolism; tetrahydrofolate interconversion. Its function is as follows. Catalyzes the oxidation of 5,10-methylenetetrahydrofolate to 5,10-methenyltetrahydrofolate and then the hydrolysis of 5,10-methenyltetrahydrofolate to 10-formyltetrahydrofolate. The protein is Bifunctional protein FolD of Streptococcus mutans serotype c (strain ATCC 700610 / UA159).